We begin with the raw amino-acid sequence, 275 residues long: uncharacterized protein (275 aa).

A run of 6 helical transmembrane segments spans residues 25–45 (LGYF…FMTA), 70–90 (LLFF…LSAI), 107–127 (IGNF…LRFV), 149–169 (FGQW…IVQF), 203–223 (IARA…AMTA), and 247–267 (ILSI…MKGI).

The protein resides in the cell membrane. This is an uncharacterized protein from Bacillus subtilis (strain 168).